Reading from the N-terminus, the 171-residue chain is Adenine phosphoribosyltransferase (171 aa).

It belongs to the purine/pyrimidine phosphoribosyltransferase family. In terms of assembly, homodimer.

It localises to the cytoplasm. The enzyme catalyses AMP + diphosphate = 5-phospho-alpha-D-ribose 1-diphosphate + adenine. It participates in purine metabolism; AMP biosynthesis via salvage pathway; AMP from adenine: step 1/1. Its function is as follows. Catalyzes a salvage reaction resulting in the formation of AMP, that is energically less costly than de novo synthesis. In Ruminiclostridium cellulolyticum (strain ATCC 35319 / DSM 5812 / JCM 6584 / H10) (Clostridium cellulolyticum), this protein is Adenine phosphoribosyltransferase.